The following is a 166-amino-acid chain: Small heat shock protein OV25-2 (166 aa).

The sHSP domain maps to 38–149 (LNECNIGNSL…ASRNIPIRAS (112 aa)). Residues 140 to 166 (ASRNIPIRASPKEPEANQKSAINDAKQ) form a disordered region.

The protein belongs to the small heat shock protein (HSP20) family.

The chain is Small heat shock protein OV25-2 (OV25-2) from Onchocerca volvulus.